Consider the following 147-residue polypeptide: Small ribosomal subunit protein uS5 (147 aa).

The S5 DRBM domain maps to 9 to 72; sequence FEEVIVDIGR…DDAFKNIVEV (64 aa).

The protein belongs to the universal ribosomal protein uS5 family. As to quaternary structure, part of the 30S ribosomal subunit. Contacts proteins S4 and S8.

With S4 and S12 plays an important role in translational accuracy. Its function is as follows. Located at the back of the 30S subunit body where it stabilizes the conformation of the head with respect to the body. This Campylobacter jejuni subsp. jejuni serotype O:6 (strain 81116 / NCTC 11828) protein is Small ribosomal subunit protein uS5.